A 186-amino-acid chain; its full sequence is ATP synthase subunit delta (186 aa).

It belongs to the ATPase delta chain family. In terms of assembly, F-type ATPases have 2 components, F(1) - the catalytic core - and F(0) - the membrane proton channel. F(1) has five subunits: alpha(3), beta(3), gamma(1), delta(1), epsilon(1). F(0) has three main subunits: a(1), b(2) and c(10-14). The alpha and beta chains form an alternating ring which encloses part of the gamma chain. F(1) is attached to F(0) by a central stalk formed by the gamma and epsilon chains, while a peripheral stalk is formed by the delta and b chains.

The protein localises to the cell membrane. In terms of biological role, f(1)F(0) ATP synthase produces ATP from ADP in the presence of a proton or sodium gradient. F-type ATPases consist of two structural domains, F(1) containing the extramembraneous catalytic core and F(0) containing the membrane proton channel, linked together by a central stalk and a peripheral stalk. During catalysis, ATP synthesis in the catalytic domain of F(1) is coupled via a rotary mechanism of the central stalk subunits to proton translocation. This protein is part of the stalk that links CF(0) to CF(1). It either transmits conformational changes from CF(0) to CF(1) or is implicated in proton conduction. The sequence is that of ATP synthase subunit delta from Mycoplasmopsis agalactiae (strain NCTC 10123 / CIP 59.7 / PG2) (Mycoplasma agalactiae).